The following is a 631-amino-acid chain: Mini-chromosome maintenance complex-binding protein (631 aa).

2 stretches are compositionally biased toward polar residues: residues 148–157 (ARVVPSTSYV) and 173–192 (TQCQ…SESH). A disordered region spans residues 148 to 218 (ARVVPSTSYV…SSSSHCTSSL (71 aa)). Residues 193-202 (GNTEPKRQET) are compositionally biased toward basic and acidic residues. The segment covering 206-217 (SQDSSSSHCTSS) has biased composition (low complexity).

This sequence belongs to the MCMBP family. As to quaternary structure, interacts with the mcm complex: associates with the mcm3-7 complex which lacks mcm2, while it does not interact with the mcm complex when mcm2 is present (mcm2-7 complex).

It localises to the nucleus. In terms of biological role, associated component of the mcm complex that acts as a regulator of DNA replication. Binds to the MCM complex during late S phase and promotes the disassembly of the mcm complex from chromatin, thereby acting as a key regulator of pre-replication complex (pre-RC) unloading from replicated DNA. Can dissociate the mcm complex without addition of ATP; probably acts by destabilizing interactions of each individual subunits of the mcm complex. Required for sister chromatid cohesion. The sequence is that of Mini-chromosome maintenance complex-binding protein (mcmbp) from Danio rerio (Zebrafish).